The chain runs to 244 residues: 5-oxoprolinase subunit A (244 aa).

This sequence belongs to the LamB/PxpA family. As to quaternary structure, forms a complex composed of PxpA, PxpB and PxpC.

It carries out the reaction 5-oxo-L-proline + ATP + 2 H2O = L-glutamate + ADP + phosphate + H(+). In terms of biological role, catalyzes the cleavage of 5-oxoproline to form L-glutamate coupled to the hydrolysis of ATP to ADP and inorganic phosphate. The sequence is that of 5-oxoprolinase subunit A from Escherichia coli O157:H7.